The chain runs to 354 residues: Guanine nucleotide-binding protein G(i) subunit alpha-1 (354 aa).

Gly2 is lipidated: N-myristoyl glycine. Cys3 carries the S-palmitoyl cysteine lipid modification. The 323-residue stretch at 32–354 (REVKLLLLGA…KNNLKDCGLF (323 aa)) folds into the G-alpha domain. Positions 35–48 (KLLLLGAGESGKST) are G1 motif. Residues 43–48 (ESGKST), 150–151 (DS), and 175–178 (LRTR) contribute to the GTP site. Ser47 lines the Mg(2+) pocket. Positions 173-181 (DVLRTRVKT) are G2 motif. Thr181 is a binding site for Mg(2+). A G3 motif region spans residues 196-205 (FKMFDVGGQR). GTP-binding positions include 200–204 (DVGGQ), 269–272 (NKKD), and Ala326. The tract at residues 265–272 (ILFLNKKD) is G4 motif. Residues 324–329 (TCATDT) are G5 motif.

It belongs to the G-alpha family. G(i/o/t/z) subfamily. Heterotrimeric G proteins are composed of 3 units; alpha, beta and gamma. The alpha chain contains the guanine nucleotide binding site. Part of a spindle orientation complex. Identified in complex with the beta subunit GNB1 and the gamma subunit GNG1. Identified in complex with the beta subunit GNB1 and the gamma subunit GNG2. GTP binding causes dissociation of the heterotrimer, liberating the individual subunits so that they can interact with downstream effector proteins. Post-translationally, myristoylation at Gly-2 is required for membrane anchoring before palmitoylation. Palmitoylation at Cys-3 varies with membrane lipid composition.

Its subcellular location is the nucleus. The protein localises to the cytoplasm. It localises to the cell membrane. The protein resides in the cytoskeleton. It is found in the microtubule organizing center. Its subcellular location is the centrosome. The protein localises to the cell cortex. It localises to the membrane. The enzyme catalyses GTP + H2O = GDP + phosphate + H(+). In terms of biological role, guanine nucleotide-binding proteins (G proteins) function as transducers downstream of G protein-coupled receptors (GPCRs) in numerous signaling cascades. The alpha chain contains the guanine nucleotide binding site and alternates between an active, GTP-bound state and an inactive, GDP-bound state. Signaling by an activated GPCR promotes GDP release and GTP binding. The alpha subunit has a low GTPase activity that converts bound GTP to GDP, thereby terminating the signal. Both GDP release and GTP hydrolysis are modulated by numerous regulatory proteins. Signaling is mediated via effector proteins, such as adenylate cyclase. Inhibits adenylate cyclase activity of ADCY1, ADCY5 and ADCY6, leading to decreased intracellular cAMP levels. Required for cortical dynein-dynactin complex recruitment during metaphase. The chain is Guanine nucleotide-binding protein G(i) subunit alpha-1 (GNAI1) from Gallus gallus (Chicken).